The sequence spans 254 residues: 5-oxoprolinase subunit A (254 aa).

Belongs to the LamB/PxpA family. In terms of assembly, forms a complex composed of PxpA, PxpB and PxpC.

It carries out the reaction 5-oxo-L-proline + ATP + 2 H2O = L-glutamate + ADP + phosphate + H(+). In terms of biological role, catalyzes the cleavage of 5-oxoproline to form L-glutamate coupled to the hydrolysis of ATP to ADP and inorganic phosphate. The sequence is that of 5-oxoprolinase subunit A from Acinetobacter baumannii (strain ATCC 17978 / DSM 105126 / CIP 53.77 / LMG 1025 / NCDC KC755 / 5377).